The sequence spans 355 residues: Natterin-1 (355 aa).

A signal peptide spans 1–18 (MIPSVLLVTLLLLSWTSA). Positions 19-27 (EKDLKVRVA) are excised as a propeptide.

Belongs to the natterin family. In terms of processing, contains 4 disulfide bonds. As to expression, expressed by the venom gland.

The protein resides in the secreted. Inhibited by tissue-kallikrein inhibitor TKI and trasylol. Plasma kallikrein inhibitor PKSI527 and classical inhibitors of serine-, metallo-, thiol- or aspartate-peptidases evokes a minor inhibition of the peptide digestion. Shows nociceptive, edema-inducing and kininogenase activity with release of kallidin from low molecular weight kininogen. The cleavage occurs at Met-Lys bonds. The chain is Natterin-1 from Thalassophryne nattereri (Copper Joe toadfish).